A 148-amino-acid polypeptide reads, in one-letter code: Large ribosomal subunit protein bL9 (148 aa).

This sequence belongs to the bacterial ribosomal protein bL9 family.

Functionally, binds to the 23S rRNA. The polypeptide is Large ribosomal subunit protein bL9 (Chloroflexus aurantiacus (strain ATCC 29366 / DSM 635 / J-10-fl)).